A 114-amino-acid polypeptide reads, in one-letter code: Large ribosomal subunit protein eL30 (114 aa).

The protein belongs to the eukaryotic ribosomal protein eL30 family.

This Branchiostoma belcheri (Amphioxus) protein is Large ribosomal subunit protein eL30 (RPL30).